We begin with the raw amino-acid sequence, 315 residues long: Transaldolase (315 aa).

The active-site Schiff-base intermediate with substrate is Lys131.

The protein belongs to the transaldolase family. Type 1 subfamily. In terms of assembly, homodimer.

It localises to the cytoplasm. The enzyme catalyses D-sedoheptulose 7-phosphate + D-glyceraldehyde 3-phosphate = D-erythrose 4-phosphate + beta-D-fructose 6-phosphate. It participates in carbohydrate degradation; pentose phosphate pathway; D-glyceraldehyde 3-phosphate and beta-D-fructose 6-phosphate from D-ribose 5-phosphate and D-xylulose 5-phosphate (non-oxidative stage): step 2/3. In terms of biological role, transaldolase is important for the balance of metabolites in the pentose-phosphate pathway. This is Transaldolase from Actinobacillus pleuropneumoniae serotype 3 (strain JL03).